The following is a 308-amino-acid chain: Probable 5-dehydro-4-deoxyglucarate dehydratase (308 aa).

This sequence belongs to the DapA family.

It catalyses the reaction 5-dehydro-4-deoxy-D-glucarate + H(+) = 2,5-dioxopentanoate + CO2 + H2O. It functions in the pathway carbohydrate acid metabolism; D-glucarate degradation; 2,5-dioxopentanoate from D-glucarate: step 2/2. The polypeptide is Probable 5-dehydro-4-deoxyglucarate dehydratase (Oceanobacillus iheyensis (strain DSM 14371 / CIP 107618 / JCM 11309 / KCTC 3954 / HTE831)).